The sequence spans 488 residues: 3-octaprenyl-4-hydroxybenzoate carboxy-lyase (488 aa).

A Mn(2+)-binding site is contributed by Asn-172. Prenylated FMN is bound by residues 175 to 177 (IYR), 189 to 191 (RWL), and 194 to 195 (RG). Residue Glu-238 participates in Mn(2+) binding. The Proton donor role is filled by Asp-287.

Belongs to the UbiD family. Homohexamer. It depends on prenylated FMN as a cofactor. Mn(2+) is required as a cofactor.

It is found in the cell membrane. It carries out the reaction a 4-hydroxy-3-(all-trans-polyprenyl)benzoate + H(+) = a 2-(all-trans-polyprenyl)phenol + CO2. Its pathway is cofactor biosynthesis; ubiquinone biosynthesis. Catalyzes the decarboxylation of 3-octaprenyl-4-hydroxy benzoate to 2-octaprenylphenol, an intermediate step in ubiquinone biosynthesis. The chain is 3-octaprenyl-4-hydroxybenzoate carboxy-lyase from Pseudomonas aeruginosa (strain LESB58).